Here is a 99-residue protein sequence, read N- to C-terminus: Integration host factor subunit alpha (99 aa).

The tract at residues 49-75 (FGNFDLRDKNQRPGRNPKTGEDIPITA) is disordered.

This sequence belongs to the bacterial histone-like protein family. As to quaternary structure, heterodimer of an alpha and a beta chain.

In terms of biological role, this protein is one of the two subunits of integration host factor, a specific DNA-binding protein that functions in genetic recombination as well as in transcriptional and translational control. This chain is Integration host factor subunit alpha, found in Klebsiella pneumoniae (strain 342).